The sequence spans 167 residues: 6,7-dimethyl-8-ribityllumazine synthase (167 aa).

Residues F26, 60-62 (AFE), and 89-91 (AVI) each bind 5-amino-6-(D-ribitylamino)uracil. 94–95 (ET) lines the (2S)-2-hydroxy-3-oxobutyl phosphate pocket. Catalysis depends on H97, which acts as the Proton donor. F122 is a binding site for 5-amino-6-(D-ribitylamino)uracil. R136 serves as a coordination point for (2S)-2-hydroxy-3-oxobutyl phosphate.

Belongs to the DMRL synthase family. In terms of assembly, forms an icosahedral capsid composed of 60 subunits, arranged as a dodecamer of pentamers.

It catalyses the reaction (2S)-2-hydroxy-3-oxobutyl phosphate + 5-amino-6-(D-ribitylamino)uracil = 6,7-dimethyl-8-(1-D-ribityl)lumazine + phosphate + 2 H2O + H(+). The protein operates within cofactor biosynthesis; riboflavin biosynthesis; riboflavin from 2-hydroxy-3-oxobutyl phosphate and 5-amino-6-(D-ribitylamino)uracil: step 1/2. Its function is as follows. Catalyzes the formation of 6,7-dimethyl-8-ribityllumazine by condensation of 5-amino-6-(D-ribitylamino)uracil with 3,4-dihydroxy-2-butanone 4-phosphate. This is the penultimate step in the biosynthesis of riboflavin. This Vesicomyosocius okutanii subsp. Calyptogena okutanii (strain HA) protein is 6,7-dimethyl-8-ribityllumazine synthase.